Reading from the N-terminus, the 1173-residue chain is Thrombospondin-1 (1173 aa).

Residues 1-18 (MKGIFLLLMLVMPQTHQA) form the signal peptide. A Laminin G-like domain is found at 22 to 224 (GNDDNSVFDL…LQNVRFVFGT (203 aa)). The interval 50–98 (HLVKGPDPSSPAYRIEDADLIPPLPEDKFQDLLDAIRADRGFILLATLR) is heparin-binding. Residues Asn155 and Asn158 are each glycosylated (N-linked (GlcNAc...) asparagine). A disulfide bridge connects residues Cys174 and Cys235. Residues Asn250 and Asn363 are each glycosylated (N-linked (GlcNAc...) asparagine). Residues 319-376 (GVCLHNGVLHKNRDEWTVDSCTECTCQNSATICRKVSCPLMPCTNATIPDGECCPRCW) form the VWFC domain. 3 TSP type-1 domains span residues 382–432 (DDDW…QDCD), 438–493 (DGGW…DPCP), and 495–550 (NGQW…QDCP). 18 cysteine pairs are disulfide-bonded: Cys394/Cys426, Cys398/Cys431, Cys409/Cys416, Cys450/Cys487, Cys454/Cys492, Cys465/Cys477, Cys507/Cys544, Cys511/Cys549, Cys522/Cys534, Cys554/Cys565, Cys559/Cys575, Cys578/Cys589, Cys595/Cys611, Cys602/Cys620, Cys623/Cys647, Cys653/Cys666, Cys660/Cys679, and Cys681/Cys692. An EGF-like 1 domain is found at 550–590 (PIDGCLSNPCFAGVKCTSFIDGSWKCGSCPPGYRGNGITCK). The 45-residue stretch at 649-693 (PRNPCADGTHDCHKNARCIYLGHYSDPMFRCECRPGYAGNGIICG) folds into the EGF-like 2 domain. TSP type-3 repeat units follow at residues 694-729 (EDTD…NSGQ), 730-765 (EDYD…NPAQ), 766-788 (YDYD…NPDQ), 789-824 (ADTD…NVDQ), 825-847 (KDTD…NPEQ), 848-885 (TDSD…NANQ), 886-921 (ADHD…NPDQ), and 922-957 (TDTN…EIST). Residues Asn705 and Asn711 are each glycosylated (N-linked (GlcNAc...) asparagine). Intrachain disulfides connect Cys708-Cys716, Cys721-Cys741, Cys757-Cys777, Cys780-Cys800, Cys816-Cys836, Cys839-Cys859, Cys877-Cys897, Cys913-Cys933, and Cys949-Cys1170. Residues 838–935 (NCPLEHNPEQ…GDGRGDACQY (98 aa)) are disordered. A compositionally biased stretch (basic and acidic residues) spans 886–897 (ADHDKDGKGDAC). The Cell attachment site signature appears at 929-931 (RGD). The TSP C-terminal domain occupies 961–1173 (RKFQMVPLDP…SDLKYECRDS (213 aa)). A glycan (N-linked (GlcNAc...) asparagine) is linked at Asn1070.

The protein belongs to the thrombospondin family. Homotrimer; disulfide-linked.

The protein localises to the secreted. It is found in the cell surface. Its subcellular location is the extracellular space. The protein resides in the extracellular matrix. It localises to the endoplasmic reticulum. The protein localises to the sarcoplasmic reticulum. Functionally, adhesive glycoprotein that mediates cell-to-cell and cell-to-matrix interactions. Can bind to fibrinogen, fibronectin, laminin, type V collagen and integrins alpha-V/beta-1, alpha-V/beta-3 and alpha-IIb/beta-3. May play a role in ER stress response. This Xenopus laevis (African clawed frog) protein is Thrombospondin-1 (thbs1).